Here is a 125-residue protein sequence, read N- to C-terminus: Phosphoribosyl-AMP cyclohydrolase (125 aa).

Aspartate 74 contributes to the Mg(2+) binding site. Cysteine 75 provides a ligand contact to Zn(2+). Mg(2+) is bound by residues aspartate 76 and aspartate 78. Positions 92 and 99 each coordinate Zn(2+).

Belongs to the PRA-CH family. Homodimer. Mg(2+) is required as a cofactor. The cofactor is Zn(2+).

It is found in the cytoplasm. It carries out the reaction 1-(5-phospho-beta-D-ribosyl)-5'-AMP + H2O = 1-(5-phospho-beta-D-ribosyl)-5-[(5-phospho-beta-D-ribosylamino)methylideneamino]imidazole-4-carboxamide. The protein operates within amino-acid biosynthesis; L-histidine biosynthesis; L-histidine from 5-phospho-alpha-D-ribose 1-diphosphate: step 3/9. Its function is as follows. Catalyzes the hydrolysis of the adenine ring of phosphoribosyl-AMP. The protein is Phosphoribosyl-AMP cyclohydrolase of Desulforapulum autotrophicum (strain ATCC 43914 / DSM 3382 / VKM B-1955 / HRM2) (Desulfobacterium autotrophicum).